The primary structure comprises 187 residues: Probable chorismate pyruvate-lyase (187 aa).

Residues arginine 80, leucine 118, and glutamate 170 each contribute to the substrate site.

The protein belongs to the UbiC family.

It is found in the cytoplasm. The catalysed reaction is chorismate = 4-hydroxybenzoate + pyruvate. Its pathway is cofactor biosynthesis; ubiquinone biosynthesis. Removes the pyruvyl group from chorismate, with concomitant aromatization of the ring, to provide 4-hydroxybenzoate (4HB) for the ubiquinone pathway. The protein is Probable chorismate pyruvate-lyase of Pseudomonas fluorescens (strain ATCC BAA-477 / NRRL B-23932 / Pf-5).